The primary structure comprises 258 residues: Imidazole glycerol phosphate synthase subunit HisF (258 aa).

Residues Asp11 and Asp130 contribute to the active site.

Belongs to the HisA/HisF family. In terms of assembly, heterodimer of HisH and HisF.

The protein localises to the cytoplasm. It catalyses the reaction 5-[(5-phospho-1-deoxy-D-ribulos-1-ylimino)methylamino]-1-(5-phospho-beta-D-ribosyl)imidazole-4-carboxamide + L-glutamine = D-erythro-1-(imidazol-4-yl)glycerol 3-phosphate + 5-amino-1-(5-phospho-beta-D-ribosyl)imidazole-4-carboxamide + L-glutamate + H(+). It functions in the pathway amino-acid biosynthesis; L-histidine biosynthesis; L-histidine from 5-phospho-alpha-D-ribose 1-diphosphate: step 5/9. Its function is as follows. IGPS catalyzes the conversion of PRFAR and glutamine to IGP, AICAR and glutamate. The HisF subunit catalyzes the cyclization activity that produces IGP and AICAR from PRFAR using the ammonia provided by the HisH subunit. In Yersinia enterocolitica serotype O:8 / biotype 1B (strain NCTC 13174 / 8081), this protein is Imidazole glycerol phosphate synthase subunit HisF.